Consider the following 604-residue polypeptide: Glucose-methanol-choline family oxidoreductase mfmG (604 aa).

An N-terminal signal peptide occupies residues 1 to 24 (MYMLRPSSLLLATGLLNQGSSVLA). A glycan (N-linked (GlcNAc...) asparagine) is linked at Asn-32. FAD-binding positions include 44–45 (TA) and 65–66 (EA). Asn-76 and Asn-97 each carry an N-linked (GlcNAc...) asparagine glycan. Residue 126-129 (NFMA) coordinates FAD. N-linked (GlcNAc...) asparagine glycosylation is found at Asn-260, Asn-265, Asn-401, and Asn-460. His-538 functions as the Proton acceptor in the catalytic mechanism. Residues Ala-572 and 584-585 (PQ) each bind FAD.

The protein belongs to the GMC oxidoreductase family. In terms of assembly, homodimer. The cofactor is FAD.

Oxidoreductase; part of the gene cluster that mediates the biosynthesis of the phthalide-terpenoid hybrid 11'-O-desmethylfendlerol. MfmG seems not to be involved directly in the biosynthesis of 11'-O-desmethylfendlerol and its role has still to be determined. The biosynthesis of 11'-O-desmethylfendlerol begins with the NR-PKS mfmB that forms 3,5-dimethylorsellinic acid (DMOA), which is then transformed into the phthalide 5,7-dihydroxy-4-(hydroxymethyl)-6-methylphthalide by the cytochrome P450 monooxygenase mfmA and the hydrolase mfmC. Subsequently, the methyltransferase mfmE catalyzes 7-O-methylation to yield 5-hydroxy-4-(hydroxymethyl)-7-methoxy-6-methylphthalide, which undergoes C-3 hydroxylation by the cytochrome P450 monooxygenase mfmF. The resultant cyclopolic acid (2,5-dihydroxy-4-(hydroxymethyl)-7-methoxy-6-methylphthalide) is then farnesylated by the DMATS-type prenyltransferase mfmD to afford 5-O-farnesylcyclopolic acid. Finally, the Pyr4-family terpene cyclase mfmH cyclizes the farnesyl moiety of 5-O-farnesylcyclopolic acid into a drimane-like structure, thus completing the biosynthesis of 11'-O-desmethylfendlerol. This is Glucose-methanol-choline family oxidoreductase mfmG from Annulohypoxylon moriforme (Filamentous fungus).